The chain runs to 227 residues: Exodeoxyribonuclease (227 aa).

The catalysed reaction is Exonucleolytic cleavage in the 3'- to 5'-direction to yield nucleoside 5'-phosphates.. Its function is as follows. 3'-5' exonuclease that preferentially uses ssDNA as substrate. Plays a role in group I intron homing. May play a role in the final step of host DNA degradation, by scavenging DNA into mononucleotides. The sequence is that of Exodeoxyribonuclease (dexA) from Escherichia coli (Bacteriophage T4).